Here is a 312-residue protein sequence, read N- to C-terminus: Malate dehydrogenase (312 aa).

NAD(+) is bound by residues 7–13 (GAAGGIG) and D34. 2 residues coordinate substrate: R81 and R87. Residues N94 and 117-119 (ITN) contribute to the NAD(+) site. Residues N119 and R153 each contribute to the substrate site. Residue H177 is the Proton acceptor of the active site. M227 is a binding site for NAD(+).

This sequence belongs to the LDH/MDH superfamily. MDH type 1 family. As to quaternary structure, homodimer.

The enzyme catalyses (S)-malate + NAD(+) = oxaloacetate + NADH + H(+). Its function is as follows. Catalyzes the reversible oxidation of malate to oxaloacetate. The protein is Malate dehydrogenase (mdh) of Moritella sp. (strain 2D2).